Consider the following 214-residue polypeptide: ATP phosphoribosyltransferase (214 aa).

This sequence belongs to the ATP phosphoribosyltransferase family. Short subfamily. As to quaternary structure, heteromultimer composed of HisG and HisZ subunits.

The protein resides in the cytoplasm. The enzyme catalyses 1-(5-phospho-beta-D-ribosyl)-ATP + diphosphate = 5-phospho-alpha-D-ribose 1-diphosphate + ATP. The protein operates within amino-acid biosynthesis; L-histidine biosynthesis; L-histidine from 5-phospho-alpha-D-ribose 1-diphosphate: step 1/9. Catalyzes the condensation of ATP and 5-phosphoribose 1-diphosphate to form N'-(5'-phosphoribosyl)-ATP (PR-ATP). Has a crucial role in the pathway because the rate of histidine biosynthesis seems to be controlled primarily by regulation of HisG enzymatic activity. This chain is ATP phosphoribosyltransferase, found in Marinobacter nauticus (strain ATCC 700491 / DSM 11845 / VT8) (Marinobacter aquaeolei).